The sequence spans 48 residues: uncharacterized protein (48 aa).

Its subcellular location is the mitochondrion. This is an uncharacterized protein from Emericella nidulans (Aspergillus nidulans).